A 247-amino-acid chain; its full sequence is uncharacterized protein (247 aa).

The next 2 helical transmembrane spans lie at 11–31 (LIAP…IYCV) and 39–59 (FIAI…TGLL).

It localises to the cell membrane. This is an uncharacterized protein from Haemophilus influenzae (strain ATCC 51907 / DSM 11121 / KW20 / Rd).